The sequence spans 782 residues: Small RNA degrading nuclease 3 (782 aa).

Residues 145–296 (MLSIDCEMVT…HDAAAAMKLV (152 aa)) enclose the Exonuclease domain. In terms of domain architecture, RRM 1 spans 331–410 (AQLFLHKIPH…KKAVLKLSSG (80 aa)). The disordered stretch occupies residues 426-464 (PCEISTSERARAEENNVSSKRQKTEDETEETKEATVNQR). Positions 469 to 549 (TKLFLHKIPH…KMVVFKLSSG (81 aa)) constitute an RRM 2 domain. Residues 563–605 (DSPGEISTTKRARTEESNMSSKRQKTEDESEETKEANAKQREA) are disordered. A coiled-coil region spans residues 577-605 (EESNMSSKRQKTEDESEETKEANAKQREA). Over residues 595 to 605 (TKEANAKQREA) the composition is skewed to basic and acidic residues. Residues 608 to 688 (TKLLLHKIPL…KMVAFKLSSG (81 aa)) form the RRM 3 domain. The stretch at 709–779 (ANANHCEDDH…KMKLEKKQSK (71 aa)) forms a coiled coil.

Belongs to the REXO1/REXO3 family. In terms of assembly, associated with the Mediator complex.

The protein localises to the nucleus. Its function is as follows. 3'-5' exonuclease degrading single-stranded small RNAs. In Arabidopsis thaliana (Mouse-ear cress), this protein is Small RNA degrading nuclease 3 (SDN3).